Here is a 208-residue protein sequence, read N- to C-terminus: Anti-sigma-W factor RsiW (208 aa).

The Cytoplasmic portion of the chain corresponds to 1–87; the sequence is MSCPEQIVQL…ASVKRWFRTH (87 aa). Residues Cys3, His30, Cys34, and Cys37 each coordinate Zn(2+). Residues 88 to 108 traverse the membrane as a helical segment; the sequence is PVIAAAAVFIILMGGGFFNSW. The Extracellular portion of the chain corresponds to 109–208; the sequence is HNDHNFSVSK…LDAFNPNGEE (100 aa).

It belongs to the zinc-associated anti-sigma factor (ZAS) superfamily. Anti-sigma-W factor family. Forms a heterodimer with cognate sigma factor SigW, which probably prevents SigW from binding to DNA. The cofactor is Zn(2+). Is processed by successive proteolytic events. First, the extracellular region of RsiW is cleaved by PrsW (site-1 cleavage) in response to cell envelope stresses. In a reconstituted E.coli system PrsW cuts between Ala-168 and Ser-169 followed by trimming by E.coli Tsp; the endogenous extracellular exopeptidase responsible for the event in B.subtilis has not been identified. Next, it undergoes cleavage at an intramembrane site (site-2 cleavage) mediated by RasP. This cleavage uncovers a cryptic proteolytic tag with conserved alanine residues in the transmembrane segment, that is recognized mainly by the ClpXP protease, which completely degrades the protein in the cytoplasm and leads to the induction of the sigma-W-controlled genes.

It is found in the cell membrane. Functionally, the anti-sigma factor for extracytoplasmic function (ECF) sigma factor sigma-W (SigW). Holds SigW, its cognate ECF sigma factor, in an inactive form until released by regulated intramembrane proteolysis (RIP). SigW and RsiW mediate cell response to cell wall stress. RIP occurs when an extracytoplasmic signal triggers a concerted proteolytic cascade to transmit information and elicit cellular responses. The membrane-spanning regulatory substrate protein is first cut periplasmically (site-1 protease, S1P, PrsW), then within the membrane itself (site-2 protease, S2P, RasP), while cytoplasmic proteases finish degrading the anti-sigma factor, liberating sigma-W. The sequence is that of Anti-sigma-W factor RsiW (rsiW) from Bacillus subtilis (strain 168).